The primary structure comprises 612 residues: Sulfite reductase [NADPH] flavoprotein alpha-component (612 aa).

In terms of domain architecture, Flavodoxin-like spans 64 to 202; it reads VTLISASQTG…QAQQWRQQVV (139 aa). FMN contacts are provided by residues 70–75, 117–120, and 153–162; these read SQTGNA, STQG, and LGDTSYEHFC. Residues 247-461 form the FAD-binding FR-type domain; the sequence is TAPLTAQLSV…IEHNDNFRLP (215 aa). Residues Thr-335, Lys-369, 399 to 402, 417 to 419, Tyr-423, and 432 to 435 each bind FAD; these read RLYS, TVG, and GGAS. NADP(+) contacts are provided by residues 532-533, 538-542, and Asp-574; these read SR and KIYVQ. Tyr-612 contacts FAD.

Belongs to the NADPH-dependent sulphite reductase flavoprotein subunit CysJ family. The protein in the N-terminal section; belongs to the flavodoxin family. It in the C-terminal section; belongs to the flavoprotein pyridine nucleotide cytochrome reductase family. In terms of assembly, alpha(8)-beta(8). The alpha component is a flavoprotein, the beta component is a hemoprotein. FAD is required as a cofactor. It depends on FMN as a cofactor.

The enzyme catalyses hydrogen sulfide + 3 NADP(+) + 3 H2O = sulfite + 3 NADPH + 4 H(+). It functions in the pathway sulfur metabolism; hydrogen sulfide biosynthesis; hydrogen sulfide from sulfite (NADPH route): step 1/1. Functionally, component of the sulfite reductase complex that catalyzes the 6-electron reduction of sulfite to sulfide. This is one of several activities required for the biosynthesis of L-cysteine from sulfate. The flavoprotein component catalyzes the electron flow from NADPH -&gt; FAD -&gt; FMN to the hemoprotein component. This chain is Sulfite reductase [NADPH] flavoprotein alpha-component, found in Yersinia pestis bv. Antiqua (strain Nepal516).